The primary structure comprises 540 residues: uncharacterized protein (540 aa).

This is an uncharacterized protein from Escherichia coli (strain K12).